Reading from the N-terminus, the 426-residue chain is Histidine--tRNA ligase (426 aa).

This sequence belongs to the class-II aminoacyl-tRNA synthetase family. Homodimer.

Its subcellular location is the cytoplasm. The enzyme catalyses tRNA(His) + L-histidine + ATP = L-histidyl-tRNA(His) + AMP + diphosphate + H(+). The polypeptide is Histidine--tRNA ligase (Streptococcus equi subsp. equi (strain 4047)).